The chain runs to 267 residues: Exosome complex component Rrp42 (267 aa).

The protein belongs to the RNase PH family. Rrp42 subfamily. In terms of assembly, component of the archaeal exosome complex. Forms a hexameric ring-like arrangement composed of 3 Rrp41-Rrp42 heterodimers. The hexameric ring associates with a trimer of Rrp4 and/or Csl4 subunits.

Its subcellular location is the cytoplasm. In terms of biological role, non-catalytic component of the exosome, which is a complex involved in RNA degradation. Contributes to the structuring of the Rrp41 active site. This chain is Exosome complex component Rrp42, found in Methanopyrus kandleri (strain AV19 / DSM 6324 / JCM 9639 / NBRC 100938).